The chain runs to 89 residues: Small ribosomal subunit protein uS15 (89 aa).

Belongs to the universal ribosomal protein uS15 family. As to quaternary structure, part of the 30S ribosomal subunit. Forms a bridge to the 50S subunit in the 70S ribosome, contacting the 23S rRNA.

One of the primary rRNA binding proteins, it binds directly to 16S rRNA where it helps nucleate assembly of the platform of the 30S subunit by binding and bridging several RNA helices of the 16S rRNA. Its function is as follows. Forms an intersubunit bridge (bridge B4) with the 23S rRNA of the 50S subunit in the ribosome. The chain is Small ribosomal subunit protein uS15 from Mycolicibacterium smegmatis (strain ATCC 700084 / mc(2)155) (Mycobacterium smegmatis).